The following is a 65-amino-acid chain: Potassium channel toxin alpha-KTx 12.6 (65 aa).

Residues 1 to 22 (MKMKIFIITIVIALFITSIVEA) form the signal peptide. 3 disulfide bridges follow: cysteine 30–cysteine 51, cysteine 36–cysteine 56, and cysteine 40–cysteine 58.

Belongs to the short scorpion toxin superfamily. Potassium channel inhibitor family. Alpha-KTx 12 subfamily. Expressed by the venom gland.

The protein resides in the secreted. In terms of biological role, inhibits voltage-gated potassium channels. The chain is Potassium channel toxin alpha-KTx 12.6 from Lychas mucronatus (Chinese swimming scorpion).